The following is a 115-amino-acid chain: Virulence-associated protein A' (115 aa).

One can recognise an HTH cro/C1-type domain in the interval 16 to 70 (IKSDLDGLGINITEAAKALDVTRAALSEIINGKRGISAKMAWKLSKAFTNSDPEF). A DNA-binding region (H-T-H motif) is located at residues 27–46 (ITEAAKALDVTRAALSEIIN).

Belongs to the VapA/VapI family.

This Dichelobacter nodosus (Bacteroides nodosus) protein is Virulence-associated protein A' (vapA').